A 543-amino-acid polypeptide reads, in one-letter code: Hydroxylamine reductase (543 aa).

4 residues coordinate [4Fe-4S] cluster: cysteine 5, cysteine 8, cysteine 17, and cysteine 23. The hybrid [4Fe-2O-2S] cluster site is built by histidine 236, glutamate 260, cysteine 304, cysteine 398, cysteine 426, cysteine 451, glutamate 486, and lysine 488. Cysteine 398 carries the post-translational modification Cysteine persulfide.

Belongs to the HCP family. It depends on [4Fe-4S] cluster as a cofactor. The cofactor is hybrid [4Fe-2O-2S] cluster.

The protein resides in the cytoplasm. The enzyme catalyses A + NH4(+) + H2O = hydroxylamine + AH2 + H(+). In terms of biological role, catalyzes the reduction of hydroxylamine to form NH(3) and H(2)O. In Bacteroides fragilis (strain ATCC 25285 / DSM 2151 / CCUG 4856 / JCM 11019 / LMG 10263 / NCTC 9343 / Onslow / VPI 2553 / EN-2), this protein is Hydroxylamine reductase.